The following is a 349-amino-acid chain: MSKIRVLSVDDSALMRQIMTEIINSHSDMEMVATAPDPLVARDLIKKFNPDVLTLDVEMPRMDGLDFLEKLMRLRPMPVVMVSSLTGKGSEVTLRALELGAIDFVTKPQLGIREGMLAYSEMIAEKVRTAAKASLAAHKPLSVPTTLKAGPLLSSEKLIAIGASTGGTEAIRHVLQPLPLSSPALLITQHMPPGFTRSFADRLNKLCQIGVKEAEDGERVLPGHAYIAPGDRHMELARSGANYQIKIHDGPAVNRHRPSVDVLFHSVAKQAGRNAVGVILTGMGNDGAAGMLAMRQAGAWTLAQNEASCVVFGMPREAINMGGVCEVVDLSQVSQQMLAKISAGQAIRI.

The Response regulatory domain occupies 5–122 (RVLSVDDSAL…REGMLAYSEM (118 aa)). The residue at position 56 (aspartate 56) is a 4-aspartylphosphate. Residues 152–344 (LLSSEKLIAI…QQMLAKISAG (193 aa)) enclose the CheB-type methylesterase domain. Catalysis depends on residues serine 164, histidine 190, and aspartate 286.

The protein belongs to the CheB family. Post-translationally, phosphorylated by CheA. Phosphorylation of the N-terminal regulatory domain activates the methylesterase activity.

Its subcellular location is the cytoplasm. It catalyses the reaction [protein]-L-glutamate 5-O-methyl ester + H2O = L-glutamyl-[protein] + methanol + H(+). The enzyme catalyses L-glutaminyl-[protein] + H2O = L-glutamyl-[protein] + NH4(+). Functionally, involved in chemotaxis. Part of a chemotaxis signal transduction system that modulates chemotaxis in response to various stimuli. Catalyzes the demethylation of specific methylglutamate residues introduced into the chemoreceptors (methyl-accepting chemotaxis proteins or MCP) by CheR. Also mediates the irreversible deamidation of specific glutamine residues to glutamic acid. This is Protein-glutamate methylesterase/protein-glutamine glutaminase from Escherichia coli O6:K15:H31 (strain 536 / UPEC).